The following is a 179-amino-acid chain: Small ribosomal subunit protein uS5c (179 aa).

An S5 DRBM domain is found at 26–89 (FVERLIKISR…TDGRKNLIDV (64 aa)).

It belongs to the universal ribosomal protein uS5 family. Part of the 30S ribosomal subunit. Contacts protein S4.

The protein localises to the plastid. It is found in the chloroplast. Functionally, with S4 and S12 plays an important role in translational accuracy. This is Small ribosomal subunit protein uS5c (rps5) from Thalassiosira pseudonana (Marine diatom).